The primary structure comprises 503 residues: Na(+)-translocating NADH-quinone reductase subunit B (503 aa).

The next 5 helical transmembrane spans lie at 55–75, 94–114, 120–140, 161–181, and 186–206; these read MMLV…NSGV, ISGF…FSIL, IFLP…VLFA, TLPP…GVVV, and FGGT…FLFF. Thr248 carries the post-translational modification FMN phosphoryl threonine. 5 helical membrane-spanning segments follow: residues 361-381, 387-407, 417-437, 452-472, and 475-495; these read TSTF…IASW, FGIG…LIVG, FFIP…LVFM, WIYG…NPAY, and GVML…YFAV.

The protein belongs to the NqrB/RnfD family. In terms of assembly, composed of six subunits; NqrA, NqrB, NqrC, NqrD, NqrE and NqrF. It depends on FMN as a cofactor.

The protein localises to the cell inner membrane. The catalysed reaction is a ubiquinone + n Na(+)(in) + NADH + H(+) = a ubiquinol + n Na(+)(out) + NAD(+). NQR complex catalyzes the reduction of ubiquinone-1 to ubiquinol by two successive reactions, coupled with the transport of Na(+) ions from the cytoplasm to the periplasm. NqrA to NqrE are probably involved in the second step, the conversion of ubisemiquinone to ubiquinol. This Chlamydia caviae (strain ATCC VR-813 / DSM 19441 / 03DC25 / GPIC) (Chlamydophila caviae) protein is Na(+)-translocating NADH-quinone reductase subunit B.